Consider the following 452-residue polypeptide: Na(+)/H(+) antiporter NhaA (452 aa).

Helical transmembrane passes span 23 to 43 (MMLFLASVLAVIMANSSLSTI), 71 to 91 (LLQFVNDVLMVIFFLAVGLEI), 108 to 128 (LPIVGAIGGMIVPVLFFLLVV), 136 to 156 (GAAIPMSTDIAFALAALAVLG), 165 to 185 (VFLTALAVADDIGGIIVIALF), 189 to 209 (HINIGMLAIAFGILFIMYLMG), 216 to 236 (LGLYFVCTFFVWLFFLQSGIH), 316 to 336 (IVGYFVLPLFAFANAGITLGG), 349 to 369 (VFLGLFVGKPLGIYFFTYGFV), 385 to 405 (LMAVSLFGGIGFTVSLFIATL), and 418 to 438 (EAKLGIFVASIFAAVVGIVTL).

It belongs to the NhaA Na(+)/H(+) (TC 2.A.33) antiporter family.

It is found in the cell inner membrane. The catalysed reaction is Na(+)(in) + 2 H(+)(out) = Na(+)(out) + 2 H(+)(in). In terms of biological role, na(+)/H(+) antiporter that extrudes sodium in exchange for external protons. The polypeptide is Na(+)/H(+) antiporter NhaA (Porphyromonas gingivalis (strain ATCC 33277 / DSM 20709 / CIP 103683 / JCM 12257 / NCTC 11834 / 2561)).